The sequence spans 206 residues: Transmembrane emp24 domain-containing protein bai (206 aa).

The first 20 residues, 1–20 (MMKAILATLAIFGCIWPGQS), serve as a signal peptide directing secretion. The Lumenal portion of the chain corresponds to 21–172 (VMFHLTPNTQ…RDTNEKTNSR (152 aa)). The region spanning 30 to 140 (QKCLKEDIQA…LKPLEVDLKR (111 aa)) is the GOLD domain. The chain crosses the membrane as a helical span at residues 173–193 (VLFFSIFSMCCLLGLATWQVL). The Cytoplasmic segment spans residues 194 to 206 (YLRRYFKAKKLIE).

Belongs to the EMP24/GP25L family.

It is found in the membrane. Its function is as follows. Eca and bai are essential, though not redundant, for dorsoventral patterning of the embryo. Specifically required during early embryogenesis for the activity of maternal tkv, while the zygotic tkv is not affected. This is Transmembrane emp24 domain-containing protein bai from Drosophila willistoni (Fruit fly).